Consider the following 171-residue polypeptide: MSPKNLTPFLTALWLLLDHSRVPRVRAEECCEFINVNHPPERCYDFKMCNRFTVALRCPDGEVCYSPEKTAEIRGIVTTMTHSLTRQVVHNKLTSCNYNPLYLEADGRIRCGKVNDKAQYLLGAAGSVPYRWINLEYDKITRIVGLNQYLESVKKHKRLDVCRAKMGYMLQ.

This sequence belongs to the HHV-5 UL128 protein family. In terms of assembly, forms the envelope pentamer complex (PC) composed of gH, gL, UL128, UL130, and UL131A. The pentamer interacts with host NRP2.

Its subcellular location is the virion membrane. Functionally, plays a role in viral entry into host cells. Forms a pentameric complex at the surface of the viral envelope together with gH, gL, UL130 and UL131. This complex is required for entry in epithelial, endothelial and myeloid host cells. Mechanistically, engages host receptor(s) including neurophilin 2/NRP2 to mediate infection. Additionally, monomeric UL128 may interfere with certain inflammatory cytokines to increase infection and dissemination by blocking monocytes migration. In Human cytomegalovirus (strain Merlin) (HHV-5), this protein is Envelope protein UL128 (UL128).